Here is a 265-residue protein sequence, read N- to C-terminus: Glutamate racemase (265 aa).

Substrate contacts are provided by residues 12 to 13 and 44 to 45; these read DS and YG. The Proton donor/acceptor role is filled by Cys-75. 76–77 lines the substrate pocket; that stretch reads NT. Catalysis depends on Cys-186, which acts as the Proton donor/acceptor. 187 to 188 is a binding site for substrate; the sequence is TH.

Belongs to the aspartate/glutamate racemases family.

It carries out the reaction L-glutamate = D-glutamate. It functions in the pathway cell wall biogenesis; peptidoglycan biosynthesis. Provides the (R)-glutamate required for cell wall biosynthesis. The sequence is that of Glutamate racemase from Pseudomonas entomophila (strain L48).